The chain runs to 338 residues: Aspartate-semialdehyde dehydrogenase (338 aa).

NADP(+) contacts are provided by residues 13–16 (SGAV) and 41–42 (RS). Arg-101 contributes to the phosphate binding site. The active-site Acyl-thioester intermediate is the Cys-132. Gln-159 lines the substrate pocket. NADP(+) is bound at residue 162–163 (SG). Lys-216 is a binding site for phosphate. Arg-238 contributes to the substrate binding site. The active-site Proton acceptor is His-245. Residue Asn-317 participates in NADP(+) binding.

It belongs to the aspartate-semialdehyde dehydrogenase family. Homodimer.

It catalyses the reaction L-aspartate 4-semialdehyde + phosphate + NADP(+) = 4-phospho-L-aspartate + NADPH + H(+). Its pathway is amino-acid biosynthesis; L-lysine biosynthesis via DAP pathway; (S)-tetrahydrodipicolinate from L-aspartate: step 2/4. It functions in the pathway amino-acid biosynthesis; L-methionine biosynthesis via de novo pathway; L-homoserine from L-aspartate: step 2/3. The protein operates within amino-acid biosynthesis; L-threonine biosynthesis; L-threonine from L-aspartate: step 2/5. Catalyzes the NADPH-dependent formation of L-aspartate-semialdehyde (L-ASA) by the reductive dephosphorylation of L-aspartyl-4-phosphate. This is Aspartate-semialdehyde dehydrogenase from Shewanella violacea (strain JCM 10179 / CIP 106290 / LMG 19151 / DSS12).